A 375-amino-acid polypeptide reads, in one-letter code: E3 ubiquitin-protein ligase RHF2A (375 aa).

The segment at 33 to 74 adopts an RING-type; atypical zinc-finger fold; that stretch reads CSICLESFCESDPSTLTSCKHEYHLQCILEWCQRSSQCPMCW. Positions 146-159 are enriched in basic residues; it reads RARHGVRREGHRSR. Disordered regions lie at residues 146-165, 172-262, and 318-375; these read RARHGVRREGHRSRSSSQGH, SSQP…SESL, and ERLE…SGSS. The span at 178 to 188 shows a compositional bias: pro residues; it reads SSPPPHPPMPS. 2 stretches are compositionally biased toward polar residues: residues 211–245 and 327–336; these read SHQSNTQPPTSSHPRQVSPSASDSNSRPLNQSSPS and RPSTASVSDV. Residues 337–365 show a composition bias toward basic and acidic residues; sequence SENHTPETNNEHNRAAAGDEHSVNERGVK.

It catalyses the reaction S-ubiquitinyl-[E2 ubiquitin-conjugating enzyme]-L-cysteine + [acceptor protein]-L-lysine = [E2 ubiquitin-conjugating enzyme]-L-cysteine + N(6)-ubiquitinyl-[acceptor protein]-L-lysine.. The protein operates within protein modification; protein ubiquitination. Functionally, E3 ubiquitin-protein ligase involved in the positive regulation of the gametogenesis progression. Required for the degradation of KRP6, a cyclin-dependent kinase inhibitor which accumulates during meiosis and blocks the progression of subsequent mitoses during gametophytes development. Functions in association with RHF1A. This chain is E3 ubiquitin-protein ligase RHF2A, found in Arabidopsis thaliana (Mouse-ear cress).